The following is a 297-amino-acid chain: Tryptophan 2,3-dioxygenase (297 aa).

Residues 51 to 55 (FIIQH), Y113, and R117 contribute to the substrate site. H240 serves as a coordination point for heme. Substrate is bound at residue T254.

The protein belongs to the tryptophan 2,3-dioxygenase family. In terms of assembly, homotetramer. It depends on heme as a cofactor.

It carries out the reaction L-tryptophan + O2 = N-formyl-L-kynurenine. The protein operates within amino-acid degradation; L-tryptophan degradation via kynurenine pathway; L-kynurenine from L-tryptophan: step 1/2. Its function is as follows. Heme-dependent dioxygenase that catalyzes the oxidative cleavage of the L-tryptophan (L-Trp) pyrrole ring and converts L-tryptophan to N-formyl-L-kynurenine. Catalyzes the oxidative cleavage of the indole moiety. The polypeptide is Tryptophan 2,3-dioxygenase (Xanthomonas oryzae pv. oryzae (strain MAFF 311018)).